The chain runs to 129 residues: uncharacterized protein (129 aa).

This is an uncharacterized protein from Haemophilus influenzae (strain ATCC 51907 / DSM 11121 / KW20 / Rd).